The following is a 196-amino-acid chain: Putative HTH-type transcriptional regulator in exeN 3'region (196 aa).

One can recognise an HTH luxR-type domain in the interval 120–185 (ASVGGDRLTR…ELFNLFLNHL (66 aa)). Residues 144-163 (TEAIAAALGIGNGTVKNHRK) constitute a DNA-binding region (H-T-H motif).

The protein is Putative HTH-type transcriptional regulator in exeN 3'region of Aeromonas salmonicida.